Reading from the N-terminus, the 468-residue chain is Monogalactosyldiacylglycerol synthase 2, chloroplastic (468 aa).

Residues His-82, Arg-251, 361–365, and Glu-383 contribute to the UDP site; that span reads GTIAE.

Belongs to the glycosyltransferase 28 family. Expressed mainly in floral buds. Detected in roots, leaves, stems, siliques and pollen tubes.

The protein resides in the plastid. The protein localises to the chloroplast outer membrane. It carries out the reaction a 1,2-diacyl-sn-glycerol + UDP-alpha-D-galactose = a 1,2-diacyl-3-O-(beta-D-galactosyl)-sn-glycerol + UDP + H(+). It catalyses the reaction 1,2-di-(9Z,12Z-octadecadienoyl)-sn-glycerol + UDP-alpha-D-galactose = 1,2-di-(9Z,12Z-octadecadienoyl)-3-beta-D-galactosyl-sn-glycerol + UDP + H(+). The catalysed reaction is 1-(9Z-octadecenoyl)-2-hexadecanoyl-sn-glycerol + UDP-alpha-D-galactose = 1-(9Z-octadecenoyl)-2-hexadecanoyl-3-beta-D-galactosyl-sn-glycerol + UDP + H(+). The enzyme catalyses 1,2-di-(9Z-octadecenoyl)-sn-glycerol + UDP-alpha-D-galactose = 1,2-di-(9Z-octadecenoyl)-3-beta-D-galactosyl-sn-glycerol + UDP + H(+). Inhibited by galvestine-1. In terms of biological role, involved in the synthesis of monogalactosyldiacylglycerol, the major structural component of photosynthetic membranes and in the chloroplast envelope biogenesis. Can use both prokaryotic (18:1/16:0) or eukaryotic (18:2/18:2) 1,2-diacylglycerol species, but operates with some preference for the eukaryotic one. Plays a minor role in galactolipid synthesis in chloroplasts. Is required for membrane lipid remodeling in phosphate-starved roots. Acts as the minor factor involved in digalactosyldiacylglycerol (DGDG) biosynthesis in phosphate-starved roots. Does not seem to be required for plant growth under nutrient-sufficient conditions. Required for membrane lipid remodeling in plants grown in acidic conditions. The protein is Monogalactosyldiacylglycerol synthase 2, chloroplastic of Arabidopsis thaliana (Mouse-ear cress).